A 285-amino-acid polypeptide reads, in one-letter code: Nucleotide-binding protein Pmen_0867 (285 aa).

8 to 15 provides a ligand contact to ATP; it reads GRSGSGKS. GTP is bound at residue 60-63; it reads DARN.

It belongs to the RapZ-like family.

Displays ATPase and GTPase activities. The polypeptide is Nucleotide-binding protein Pmen_0867 (Ectopseudomonas mendocina (strain ymp) (Pseudomonas mendocina)).